A 218-amino-acid chain; its full sequence is Type II restriction enzyme KpnI (218 aa).

The catalysed reaction is Endonucleolytic cleavage of DNA to give specific double-stranded fragments with terminal 5'-phosphates.. Functionally, a P subtype restriction enzyme that recognizes the double-stranded sequence 5'-GGTACC-3' and cleaves after C-5. This chain is Type II restriction enzyme KpnI, found in Klebsiella pneumoniae.